The sequence spans 111 residues: 2Fe-2S ferredoxin (111 aa).

One can recognise a 2Fe-2S ferredoxin-type domain in the interval 1 to 104 (MPKVLFLPHK…DIEVEIPLYN (104 aa)). Residues cysteine 42, cysteine 48, cysteine 51, and cysteine 87 each contribute to the [2Fe-2S] cluster site.

The protein belongs to the adrenodoxin/putidaredoxin family. The cofactor is [2Fe-2S] cluster.

Its function is as follows. Ferredoxin are iron-sulfur proteins that transfer electrons in a wide variety of metabolic reactions. This is 2Fe-2S ferredoxin (fdx) from Buchnera aphidicola subsp. Acyrthosiphon pisum (strain APS) (Acyrthosiphon pisum symbiotic bacterium).